The chain runs to 498 residues: Guanosine-5'-triphosphate,3'-diphosphate pyrophosphatase (498 aa).

The protein belongs to the GppA/Ppx family. GppA subfamily.

The enzyme catalyses guanosine 3'-diphosphate 5'-triphosphate + H2O = guanosine 3',5'-bis(diphosphate) + phosphate + H(+). It participates in purine metabolism; ppGpp biosynthesis; ppGpp from GTP: step 2/2. Its function is as follows. Catalyzes the conversion of pppGpp to ppGpp. Guanosine pentaphosphate (pppGpp) is a cytoplasmic signaling molecule which together with ppGpp controls the 'stringent response', an adaptive process that allows bacteria to respond to amino acid starvation, resulting in the coordinated regulation of numerous cellular activities. This chain is Guanosine-5'-triphosphate,3'-diphosphate pyrophosphatase, found in Pectobacterium atrosepticum (strain SCRI 1043 / ATCC BAA-672) (Erwinia carotovora subsp. atroseptica).